A 525-amino-acid polypeptide reads, in one-letter code: GMP synthase [glutamine-hydrolyzing] (525 aa).

Positions 8 to 207 (KILILDFGSQ…ALDICECEAN (200 aa)) constitute a Glutamine amidotransferase type-1 domain. The active-site Nucleophile is the Cys85. Catalysis depends on residues His181 and Glu183. The region spanning 208–400 (WKPTSIIEDA…LGLPYDMLYR (193 aa)) is the GMPS ATP-PPase domain. ATP is bound at residue 235-241 (SGGVDSS).

As to quaternary structure, homodimer.

It carries out the reaction XMP + L-glutamine + ATP + H2O = GMP + L-glutamate + AMP + diphosphate + 2 H(+). It functions in the pathway purine metabolism; GMP biosynthesis; GMP from XMP (L-Gln route): step 1/1. Functionally, catalyzes the synthesis of GMP from XMP. The sequence is that of GMP synthase [glutamine-hydrolyzing] from Shewanella sediminis (strain HAW-EB3).